The chain runs to 324 residues: Arginase (324 aa).

Mn(2+)-binding residues include H115, D143, H145, and D147. Residues 145 to 149, 156 to 158, and D202 contribute to the substrate site; these read HADIN and SGN. 2 residues coordinate Mn(2+): D249 and D251. T263 and E294 together coordinate substrate.

This sequence belongs to the arginase family. Homotrimer. Mn(2+) is required as a cofactor.

The enzyme catalyses L-arginine + H2O = urea + L-ornithine. It participates in nitrogen metabolism; urea cycle; L-ornithine and urea from L-arginine: step 1/1. This Emericella nidulans (strain FGSC A4 / ATCC 38163 / CBS 112.46 / NRRL 194 / M139) (Aspergillus nidulans) protein is Arginase (agaA).